Reading from the N-terminus, the 192-residue chain is UPF0301 protein Rru_A3059 (192 aa).

Belongs to the UPF0301 (AlgH) family.

The polypeptide is UPF0301 protein Rru_A3059 (Rhodospirillum rubrum (strain ATCC 11170 / ATH 1.1.1 / DSM 467 / LMG 4362 / NCIMB 8255 / S1)).